An 860-amino-acid chain; its full sequence is Leucine--tRNA ligase (860 aa).

Positions 42-52 (PYPSGRLHMGH) match the 'HIGH' region motif. A 'KMSKS' region motif is present at residues 619-623 (KMSKS). Residue lysine 622 coordinates ATP.

Belongs to the class-I aminoacyl-tRNA synthetase family.

It localises to the cytoplasm. It carries out the reaction tRNA(Leu) + L-leucine + ATP = L-leucyl-tRNA(Leu) + AMP + diphosphate. In Proteus mirabilis (strain HI4320), this protein is Leucine--tRNA ligase.